The primary structure comprises 240 residues: Uridylate kinase (240 aa).

ATP is bound at residue Lys13–Gly16. The segment at Gly21–Gly26 is involved in allosteric activation by GTP. Gly55 contacts UMP. Positions 56 and 60 each coordinate ATP. Residues Asp75 and Thr136–Thr143 each bind UMP. ATP is bound by residues Thr163, Gln164, Tyr169, and Asp172.

It belongs to the UMP kinase family. Homohexamer.

It localises to the cytoplasm. The catalysed reaction is UMP + ATP = UDP + ADP. It functions in the pathway pyrimidine metabolism; CTP biosynthesis via de novo pathway; UDP from UMP (UMPK route): step 1/1. With respect to regulation, allosterically activated by GTP. Inhibited by UTP. Its function is as follows. Catalyzes the reversible phosphorylation of UMP to UDP. The polypeptide is Uridylate kinase (Brucella abortus biovar 1 (strain 9-941)).